A 172-amino-acid chain; its full sequence is Bifunctional protein PyrR (172 aa).

The PRPP-binding motif lies at 90–102; it reads LVLIDDVLMSGRT.

It belongs to the purine/pyrimidine phosphoribosyltransferase family. PyrR subfamily.

The enzyme catalyses UMP + diphosphate = 5-phospho-alpha-D-ribose 1-diphosphate + uracil. Regulates the transcription of the pyrimidine nucleotide (pyr) operon in response to exogenous pyrimidines. In terms of biological role, also displays a weak uracil phosphoribosyltransferase activity which is not physiologically significant. In Pseudomonas putida (strain W619), this protein is Bifunctional protein PyrR.